The following is an 857-amino-acid chain: KH domain-containing protein HEN4 (857 aa).

Residues M1–G15 are compositionally biased toward basic and acidic residues. Residues M1–K27 are disordered. 4 KH domains span residues H46 to A110, T149 to I217, D451 to I521, and S541 to I610. A disordered region spans residues S644–L755. Polar residues-rich tracts occupy residues D645–S665 and S673–V688. The span at F718–T730 shows a compositional bias: basic and acidic residues. The span at R746–L755 shows a compositional bias: low complexity. The KH 5 domain maps to N775–L839.

Interacts with HUA1. Interacts with FLK and PEP.

The protein resides in the nucleus speckle. In terms of biological role, functions in floral reproductive organ identity in the third whorl and floral determinacy specification by specifically promoting the processing of AGAMOUS (AG) pre-mRNA. Functions in association with HUA1 and HUA2. This Arabidopsis thaliana (Mouse-ear cress) protein is KH domain-containing protein HEN4.